We begin with the raw amino-acid sequence, 683 residues long: Protein zntD (683 aa).

The next 3 membrane-spanning stretches (helical) occupy residues 12 to 32 (IIST…PYWM), 42 to 62 (LSWS…LHLF), and 79 to 99 (PFAA…ELII). The segment covering 120-129 (VHLSHGHSHH) has biased composition (basic residues). 4 disordered regions span residues 120-180 (VHLS…TTTT), 299-325 (GFSN…NNNN), 364-390 (CSND…TPNT), and 451-489 (IGNS…NNNN). A compositionally biased stretch (gly residues) spans 137 to 149 (GNPGSGVGIGMGS). 2 stretches are compositionally biased toward low complexity: residues 160 to 180 (TTSP…TTTT) and 302 to 325 (NNNN…NNNN). The span at 451–465 (IGNSGNIGSNNNNNN) shows a compositional bias: low complexity. Residues 466-475 (NGGGGGGGGN) are compositionally biased toward gly residues. The segment covering 476–489 (SNIDYNDNEENNNN) has biased composition (low complexity). 5 helical membrane passes run 534-554 (ILLP…EGLA), 564-584 (VFDI…ALGI), 600-620 (FLLV…GMVI), 631-651 (PPIL…VEII), and 662-682 (ILIK…VAIW).

Belongs to the ZIP transporter (TC 2.A.5) family.

It localises to the membrane. In terms of biological role, may transport divalent cations. May participate, with dstA, in the regulation of the differentiation of stalk cells during development. The polypeptide is Protein zntD (zntD) (Dictyostelium discoideum (Social amoeba)).